The chain runs to 269 residues: Phosphate import ATP-binding protein PstB 2 (269 aa).

One can recognise an ABC transporter domain in the interval 22-264; it reads LSTNDLRVFY…PSLQSTEDYV (243 aa). 55–62 contributes to the ATP binding site; that stretch reads GPSGSGKS.

It belongs to the ABC transporter superfamily. Phosphate importer (TC 3.A.1.7) family. The complex is composed of two ATP-binding proteins (PstB), two transmembrane proteins (PstC and PstA) and a solute-binding protein (PstS).

The protein resides in the cell membrane. It catalyses the reaction phosphate(out) + ATP + H2O = ADP + 2 phosphate(in) + H(+). Part of the ABC transporter complex PstSACB involved in phosphate import. Responsible for energy coupling to the transport system. In Lactococcus lactis subsp. lactis (strain IL1403) (Streptococcus lactis), this protein is Phosphate import ATP-binding protein PstB 2.